The primary structure comprises 418 residues: Glucose-1-phosphate adenylyltransferase (418 aa).

Alpha-D-glucose 1-phosphate is bound by residues tyrosine 104, glycine 169, 184-185 (EK), and serine 202.

This sequence belongs to the bacterial/plant glucose-1-phosphate adenylyltransferase family. Homotetramer.

The catalysed reaction is alpha-D-glucose 1-phosphate + ATP + H(+) = ADP-alpha-D-glucose + diphosphate. Its pathway is glycan biosynthesis; glycogen biosynthesis. Its function is as follows. Involved in the biosynthesis of ADP-glucose, a building block required for the elongation reactions to produce glycogen. Catalyzes the reaction between ATP and alpha-D-glucose 1-phosphate (G1P) to produce pyrophosphate and ADP-Glc. In Jannaschia sp. (strain CCS1), this protein is Glucose-1-phosphate adenylyltransferase.